The following is a 204-amino-acid chain: Large ribosomal subunit protein bL25 (204 aa).

The segment at 1 to 23 is disordered; the sequence is MSETLHLSAETRDRAGKGASRAL.

This sequence belongs to the bacterial ribosomal protein bL25 family. CTC subfamily. Part of the 50S ribosomal subunit; part of the 5S rRNA/L5/L18/L25 subcomplex. Contacts the 5S rRNA. Binds to the 5S rRNA independently of L5 and L18.

Its function is as follows. This is one of the proteins that binds to the 5S RNA in the ribosome where it forms part of the central protuberance. The chain is Large ribosomal subunit protein bL25 from Novosphingobium aromaticivorans (strain ATCC 700278 / DSM 12444 / CCUG 56034 / CIP 105152 / NBRC 16084 / F199).